A 264-amino-acid chain; its full sequence is 2',3'-cyclic-nucleotide 2'-phosphodiesterase (264 aa).

Residues D8, E39, N40, and N67 each contribute to the Fe cation site. The Proton donor role is filled by H68. Residues H150, H175, and H177 each coordinate Fe cation.

Belongs to the YmdB-like family. As to quaternary structure, homodimer. The cofactor is Fe(2+). Fe(3+) is required as a cofactor.

It is found in the cytoplasm. The enzyme catalyses a nucleoside 2',3'-cyclic phosphate + H2O = a nucleoside 3'-phosphate + H(+). Its function is as follows. Plays a central, regulatory role in the late adaptive responses and affects the levels of many genes. May act via regulation of cAMP levels. Decreases the expression of motility genes and induces genes involved in biofilm formation, by controlling the expression of SlrR. Required for formation of intercellular nanotubes that bridge neighboring cells to allow molecular exchange. Plays a key role in directing the early stages of colony development. In vitro, has a metal-dependent phosphodiesterase activity against 2',3'-cAMP and 2',3'-cGMP. Also has 3',5'-cyclic-nucleotide phosphodiesterase activity, but cannot use cyclic di-AMP or cyclic di-GMP, and does not have phosphatase activity. The sequence is that of 2',3'-cyclic-nucleotide 2'-phosphodiesterase (ymdB) from Bacillus subtilis (strain 168).